The primary structure comprises 360 residues: BLOC-1-related complex subunit 6 (360 aa).

Over residues Met1–Pro10 the composition is skewed to basic and acidic residues. The tract at residues Met1 to Thr201 is disordered. The span at Val23 to Lys35 shows a compositional bias: polar residues. At Thr41 the chain carries Phosphothreonine. Positions His71 to Ser83 are enriched in basic and acidic residues. The segment covering Ser89–Ser100 has biased composition (low complexity). Ser130 carries the post-translational modification Phosphoserine. Over residues Glu144–Ala156 the composition is skewed to acidic residues. Ser173 carries the phosphoserine modification. Over residues Gly179–Arg198 the composition is skewed to gly residues. Residue Thr201 is modified to Phosphothreonine. Position 204 is a phosphoserine (Ser204).

It belongs to the BORCS6 family. Component of the BLOC-one-related complex (BORC) which is composed of BLOC1S1, BLOC1S2, BORCS5, BORCS6, BORCS7, BORCS8, KXD1 and SNAPIN.

The protein localises to the lysosome membrane. As part of the BORC complex may play a role in lysosomes movement and localization at the cell periphery. Associated with the cytosolic face of lysosomes, the BORC complex may recruit ARL8B and couple lysosomes to microtubule plus-end-directed kinesin motor. The sequence is that of BLOC-1-related complex subunit 6 from Rattus norvegicus (Rat).